The following is a 224-amino-acid chain: Peroxiredoxin-6 (224 aa).

A Thioredoxin domain is found at 5–169; the sequence is LLLGDVAPNF…ILRVVISLQL (165 aa). A required and sufficient for targeting to lysosomes and lamellar bodies region spans residues 31 to 40; sequence DSWGILFSHP. Thr44 carries the phosphothreonine modification. Catalysis depends on Cys47, which acts as the Cysteine sulfenic acid (-SOH) intermediate; for peroxidase activity. Residue Lys63 is modified to N6-acetyllysine. Residue Tyr89 is modified to Phosphotyrosine. Asp140 acts as the For phospholipase activity in catalysis. Thr177 bears the Phosphothreonine; by MAPK mark. Residue Lys209 is modified to N6-acetyllysine; alternate. Residue Lys209 is modified to N6-succinyllysine; alternate.

It belongs to the peroxiredoxin family. Prx6 subfamily. As to quaternary structure, homodimer. Interacts with GSTP1; mediates PRDX6 glutathionylation and regeneration. Interacts with APEX1. Interacts with STH. May interact with FAM168B. May interact with HTR2A. Irreversibly inactivated by overoxidation of Cys-47 to sulfinic acid (Cys-SO(2)H) and sulfonic acid (Cys-SO(3)H) forms upon oxidative stress. In terms of processing, phosphorylation at Thr-177 by MAP kinases increases the phospholipase activity of the enzyme. The phosphorylated form exhibits a greater lysophosphatidylcholine acyltransferase activity compared to the non-phosphorylated form.

The protein localises to the cytoplasm. Its subcellular location is the lysosome. It carries out the reaction a hydroperoxide + 2 glutathione = an alcohol + glutathione disulfide + H2O. The enzyme catalyses a 1,2-diacyl-sn-glycero-3-phosphocholine + H2O = a 1-acyl-sn-glycero-3-phosphocholine + a fatty acid + H(+). It catalyses the reaction a 1-acyl-sn-glycero-3-phosphocholine + an acyl-CoA = a 1,2-diacyl-sn-glycero-3-phosphocholine + CoA. The catalysed reaction is 1-hexadecanoyl-sn-glycero-3-phosphocholine + hexadecanoyl-CoA = 1,2-dihexadecanoyl-sn-glycero-3-phosphocholine + CoA. It carries out the reaction 1,2-dihexadecanoyl-sn-glycero-3-phosphocholine + H2O = 1-hexadecanoyl-sn-glycero-3-phosphocholine + hexadecanoate + H(+). Thiol-specific peroxidase that catalyzes the reduction of hydrogen peroxide and organic hydroperoxides to water and alcohols, respectively. Can reduce H(2)O(2) and short chain organic, fatty acid, and phospholipid hydroperoxides. Also has phospholipase activity, and can therefore either reduce the oxidized sn-2 fatty acyl group of phospholipids (peroxidase activity) or hydrolyze the sn-2 ester bond of phospholipids (phospholipase activity). These activities are dependent on binding to phospholipids at acidic pH and to oxidized phospholipds at cytosolic pH. Plays a role in cell protection against oxidative stress by detoxifying peroxides and in phospholipid homeostasis. Exhibits acyl-CoA-dependent lysophospholipid acyltransferase which mediates the conversion of lysophosphatidylcholine (1-acyl-sn-glycero-3-phosphocholine or LPC) into phosphatidylcholine (1,2-diacyl-sn-glycero-3-phosphocholine or PC). Shows a clear preference for LPC as the lysophospholipid and for palmitoyl CoA as the fatty acyl substrate. The protein is Peroxiredoxin-6 (PRDX6) of Pongo abelii (Sumatran orangutan).